Reading from the N-terminus, the 251-residue chain is CDP-diacylglycerol pyrophosphatase (251 aa).

The helical transmembrane segment at 4 to 24 (AGLLFLVMIVIAVVAAGIGYW) threads the bilayer.

Belongs to the Cdh family.

Its subcellular location is the cell inner membrane. It carries out the reaction a CDP-1,2-diacyl-sn-glycerol + H2O = a 1,2-diacyl-sn-glycero-3-phosphate + CMP + 2 H(+). It functions in the pathway phospholipid metabolism; CDP-diacylglycerol degradation; phosphatidate from CDP-diacylglycerol: step 1/1. The polypeptide is CDP-diacylglycerol pyrophosphatase (Shigella boydii serotype 4 (strain Sb227)).